Consider the following 184-residue polypeptide: MYQLKKLYNEELKAKLSEELGIKNPMLLPKLEKIVISVGAGDHAKDTKVMQNIADTISLIAGQKAVITIAKKSVAGFKMREGMPMGVKVTLRGNQMYNFLEKLISIALPRVKDFRGVPRNGFDGRGNYSFGLNEQLMFPEVVYDDIMVSHGMNITMVTTTNNDKEAFKMLELFGMPFAKGRVNG.

This sequence belongs to the universal ribosomal protein uL5 family. In terms of assembly, part of the 50S ribosomal subunit; part of the 5S rRNA/L5/L18/L25 subcomplex. Contacts the 5S rRNA and the P site tRNA. Forms a bridge to the 30S subunit in the 70S ribosome.

Functionally, this is one of the proteins that bind and probably mediate the attachment of the 5S RNA into the large ribosomal subunit, where it forms part of the central protuberance. In the 70S ribosome it contacts protein S13 of the 30S subunit (bridge B1b), connecting the 2 subunits; this bridge is implicated in subunit movement. Contacts the P site tRNA; the 5S rRNA and some of its associated proteins might help stabilize positioning of ribosome-bound tRNAs. In Wolinella succinogenes (strain ATCC 29543 / DSM 1740 / CCUG 13145 / JCM 31913 / LMG 7466 / NCTC 11488 / FDC 602W) (Vibrio succinogenes), this protein is Large ribosomal subunit protein uL5.